Here is a 619-residue protein sequence, read N- to C-terminus: Nuclear hormone receptor family member nhr-6 (619 aa).

Polar residues predominate over residues 1–18 (MEQLSIQTDELQDQFSNC). Disordered stretches follow at residues 1–29 (MEQLSIQTDELQDQFSNCSPASVDSSYSS), 58–86 (MSKNSSCSSSFDYGEFGPSSSSRKGSKTT), 103–134 (QVNTVPKPTKTEVESIPEEFEQKPSSSSHRLP), and 196–232 (QHFPVSDSRRGSQGTTSSSNNTGGTPSPHSSSLPTSP). A compositionally biased stretch (low complexity) spans 19 to 29 (SPASVDSSYSS). Over residues 125 to 134 (KPSSSSHRLP) the composition is skewed to polar residues. Positions 206-232 (GSQGTTSSSNNTGGTPSPHSSSLPTSP) are enriched in low complexity. The nuclear receptor DNA-binding region spans 265 to 340 (DKMCAVCNDR…VGMVKEIVRH (76 aa)). 2 NR C4-type zinc fingers span residues 268–288 (CAVCNDRAVCLHYGARTCEGC) and 304–328 (CAGNKTCPIDKRYRSRCQYCRYQKC). A disordered region spans residues 345–365 (GRRGRLSSKTKLARSEDQPSP). Over residues 346-356 (RRGRLSSKTKL) the composition is skewed to basic residues. Residues 365–600 (PPLPLLALMG…STDAPPACGS (236 aa)) form the NR LBD domain. An AF-2 region spans residues 589–600 (LRSTDAPPACGS).

The protein belongs to the nuclear hormone receptor family. NR4 subfamily. As to expression, in hermaphrodites, expressed in the developing spermatheca and dorsal uterus. Expression includes the 8 cells of the dorsal somatic gonad primordium and the sujc cells that form the core of the spermatheca-uterine valve. Expressed in the precursor cells of the spermatheca-sheath lineages (SS cells) and in the precursors and descendents of the dorsal-uterine lineage (DU cells). In both hermaphroditic and male animals, expressed in a pair of head chemosensory neurons.

Its subcellular location is the nucleus. Its function is as follows. Transcriptional activator that induces gene expression by binding to the NGFI-B response element (NBRE) 5'-AAAGGTCA-3'. Required for proper morphogenesis of the spermatheca and the spermatheca-uterine valve formation. Promotes cell proliferation and differentiation of the spermatheca precursor cells during spermatheca development in larval stage L4. Might play a role in promoting G1/S phase progression in the spermatheca precursor cell lineage. Also required for the differentiation of the spermatheca-uterine junction core (sujc) cells which are generating the spermatheca-uterine valve. In Caenorhabditis elegans, this protein is Nuclear hormone receptor family member nhr-6 (nhr-6).